The primary structure comprises 171 residues: RNA silencing suppressor p19 (171 aa).

The segment covering 1–15 (MERAIPGNDTREPAY) has biased composition (basic and acidic residues). A disordered region spans residues 1 to 32 (MERAIPGNDTREPAYGERWNGGPGGSTSPFQL).

This sequence belongs to the tombusvirus protein p19 family. In terms of assembly, homodimer.

In terms of biological role, viral suppressor of RNA silencing which binds specifically to silencing RNAs (siRNAs). Acts as a molecular caliper to specifically select siRNAs based on the length of the duplex region of the RNA. The polypeptide is RNA silencing suppressor p19 (Capsicum annuum (Capsicum pepper)).